The following is a 337-amino-acid chain: Hsp90 co-chaperone Cdc37-like 1 (337 aa).

Residues 1–11 (MEQPWPPPGPW) are compositionally biased toward pro residues. Positions 1-43 (MEQPWPPPGPWSLPRAEGEAEEESDLDLSPGSPRCPQLPGGGT) are disordered. The interval 2–171 (EQPWPPPGPW…HEQKIRHFGM (170 aa)) is self-association. S32 and S88 each carry phosphoserine. Residues 84-122 (HNSESLDQEHAKAQTAISELRQREEEWRQKEEALVQRER) are a coiled coil. The self-association and interaction with Hsp90 stretch occupies residues 147–277 (KETEDEDKSK…SRVRLYSQSP (131 aa)). Residues 267 to 337 (KSRVRLYSQS…DDEPKMMDTV (71 aa)) form an interaction with Hsp70 region. Residues 278–337 (NFQPVTVQNHVPHSGVGSIGLLESLPQNPDYLQYSINTALCSLNSVVHKEDDEPKMMDTV) form a required for interaction with STIP1 region.

Belongs to the CDC37 family. In terms of assembly, self-associates. Forms complexes with Hsp70 and Hsp90. Interacts with CDC37, FKBP4, PPID and STIP1.

It is found in the cytoplasm. Co-chaperone that binds to numerous proteins and promotes their interaction with Hsp70 and Hsp90. The sequence is that of Hsp90 co-chaperone Cdc37-like 1 (CDC37L1) from Bos taurus (Bovine).